A 318-amino-acid polypeptide reads, in one-letter code: Protein FdhE homolog (318 aa).

The protein belongs to the FdhE family.

It localises to the cytoplasm. Functionally, necessary for formate dehydrogenase activity. The protein is Protein FdhE homolog of Pseudomonas putida (strain ATCC 47054 / DSM 6125 / CFBP 8728 / NCIMB 11950 / KT2440).